The chain runs to 719 residues: Endonuclease MutS2 (719 aa).

273–280 (GPNTGGKT) contacts ATP. Positions 644 to 719 (LDLRGYRYED…GFGVTVATLK (76 aa)) constitute a Smr domain.

This sequence belongs to the DNA mismatch repair MutS family. MutS2 subfamily. In terms of assembly, homodimer. Binds to stalled ribosomes, contacting rRNA.

Its function is as follows. Endonuclease that is involved in the suppression of homologous recombination and thus may have a key role in the control of bacterial genetic diversity. Functionally, acts as a ribosome collision sensor, splitting the ribosome into its 2 subunits. Detects stalled/collided 70S ribosomes which it binds and splits by an ATP-hydrolysis driven conformational change. Acts upstream of the ribosome quality control system (RQC), a ribosome-associated complex that mediates the extraction of incompletely synthesized nascent chains from stalled ribosomes and their subsequent degradation. Probably generates substrates for RQC. This is Endonuclease MutS2 from Staphylococcus aureus.